Consider the following 199-residue polypeptide: Adenylyl-sulfate kinase (199 aa).

Gly-34 to Ser-41 lines the ATP pocket. Catalysis depends on Ser-108, which acts as the Phosphoserine intermediate.

This sequence belongs to the APS kinase family.

The catalysed reaction is adenosine 5'-phosphosulfate + ATP = 3'-phosphoadenylyl sulfate + ADP + H(+). The protein operates within sulfur metabolism; hydrogen sulfide biosynthesis; sulfite from sulfate: step 2/3. Catalyzes the synthesis of activated sulfate. This is Adenylyl-sulfate kinase from Staphylococcus carnosus (strain TM300).